Here is a 162-residue protein sequence, read N- to C-terminus: NADH-quinone oxidoreductase subunit E (162 aa).

Positions 88, 93, 129, and 133 each coordinate [2Fe-2S] cluster.

The protein belongs to the complex I 24 kDa subunit family. As to quaternary structure, composed of 13 different subunits. Subunits NuoCD, E, F, and G constitute the peripheral sector of the complex. Requires [2Fe-2S] cluster as cofactor.

It carries out the reaction a quinone + NADH + 5 H(+)(in) = a quinol + NAD(+) + 4 H(+)(out). In terms of biological role, NDH-1 shuttles electrons from NADH, via FMN and iron-sulfur (Fe-S) centers, to quinones in the respiratory chain. Couples the redox reaction to proton translocation (for every two electrons transferred, four hydrogen ions are translocated across the cytoplasmic membrane), and thus conserves the redox energy in a proton gradient. In Buchnera aphidicola subsp. Acyrthosiphon pisum (strain APS) (Acyrthosiphon pisum symbiotic bacterium), this protein is NADH-quinone oxidoreductase subunit E (nuoE).